A 2346-amino-acid chain; its full sequence is Nucleoprotein TPR (2346 aa).

Coiled-coil stretches lie at residues 38 to 190, 217 to 366, 395 to 493, and 565 to 596; these read DEYC…HKEI, QLQS…NLES, YAKS…SRQV, and KMLL…NNTV. Residues 622–649 form a disordered region; the sequence is VDLDDSNLEPNDSALDTSEQPAANFEES. A compositionally biased stretch (polar residues) spans 629-642; the sequence is LEPNDSALDTSEQP. Coiled-coil stretches lie at residues 643–1158 and 1196–1247; these read AANF…IEAL and EEGR…DELN. The tract at residues 1187–1655 is interacts with Mad1; it reads LNASGLTAAE…SPRTANVKPM (469 aa). Phosphothreonine occurs at positions 1259, 1302, 1338, and 1390. Coiled-coil stretches lie at residues 1281–1536 and 1579–1627; these read TDSN…KRTE and SYDE…GSQQ. 2 stretches are compositionally biased toward polar residues: residues 1621 to 1649 and 1657 to 1667; these read RQLG…SPRT and GSATVQQSATV. Disordered stretches follow at residues 1621 to 1677, 1695 to 1768, and 1821 to 2346; these read RQLG…ETPL, PTSQ…YMPS, and SPRV…GRFP. A compositionally biased stretch (low complexity) spans 1702–1722; it reads AGSSTSTSSSSSSSSTSTTSA. The segment covering 1738–1747 has biased composition (polar residues); that stretch reads PQQQVHTTGS. Composition is skewed to low complexity over residues 1752–1761 and 1827–1878; these read SMASSSPTSS and SSSS…PSSS. Positions 1879–1891 are enriched in polar residues; sequence NVTTTQAGCSSQG. Residues 1953 to 2023 show a composition bias toward acidic residues; it reads QEDDIQVVDS…QDNNEVDIEV (71 aa). Positions 2028–2080 are enriched in polar residues; sequence MQAQEESQSLDNQAIATASASTQENNQSQAITSGSGESSNPVTLPQAEASNWK. Residues 2082–2091 are compositionally biased toward low complexity; the sequence is AAASTSTAAA. Polar residues-rich tracts occupy residues 2097 to 2110 and 2142 to 2159; these read SVEI…SNFC and GAAS…GESS. A compositionally biased stretch (basic and acidic residues) spans 2165 to 2184; that stretch reads KAADDGGDHADGTDNAREAD. 2 stretches are compositionally biased toward polar residues: residues 2193–2223 and 2302–2322; these read ATGQ…NQAN and RDTS…NRFA. A compositionally biased stretch (basic residues) spans 2323 to 2332; the sequence is QRTRNRRPIR.

This sequence belongs to the TPR family. As to quaternary structure, part of the nuclear pore complex (NPC). Associates with male-specific lethal (MSL) histone acetyltransferase complex. Interacts with Mad2; the interaction is required for efficient recruitment of Mad2 to unattached kinetochore and occurs in a microtubule-independent manner. Interacts with Mad1 (N-terminus). Interacts with Chro, east and Asator; the interaction is part of a macromolecular complex forming the spindle matrix during mitosis. Interacts with Nup98. In males, interacts with histone acetyltransferase mof. In terms of processing, mps1-mediated phosphorylation disrupts interaction with Mad1 during mitosis. As to expression, expressed in salivary glands, fat body, tracheal tube, esophageal tube and anterior ejaculatory duct (at protein level).

Its subcellular location is the nucleus. It is found in the nucleus matrix. The protein localises to the nucleus lamina. It localises to the nucleus envelope. The protein resides in the nucleus membrane. Its subcellular location is the nuclear pore complex. It is found in the cytoplasm. The protein localises to the cytoskeleton. It localises to the spindle. The protein resides in the chromosome. Its subcellular location is the centromere. It is found in the kinetochore. The protein localises to the midbody. In terms of biological role, component of the nuclear pore complex (NPC), a complex required for the trafficking across the nuclear envelope. Functions as a scaffolding element in the nuclear phase of the NPC. Plays a role in chromosomal organization and gene expression regulation; stimulates transcription by promoting the formation of an open chromatin environment. Binds chromatin to nucleoporin-associated regions (NARs) that define transcriptionally active regions of the genome. Associates with extended chromosomal regions that alternate between domains of high density binding with those of low occupancy. Preferentially binds to NARs of the male X chromosome. In males, together with Nup153, required for the localization of the male-specific lethal (MSL) histone acetyltransferase complex to the X chromosome and therefore for the transcription of dosage compensation genes. In males, restrains dosage-compensated expression at the level of nascent transcription probably by interacting with the MSL complex and by modulating RNA Polymerase II phosphorylation status and activity. During mitosis forms a gel-like spindle matrix complex together with Skeletor (Skel), Chro, east, and Asator embedding the microtubule spindle apparatus. During interphase localizes Mad1 to the nuclear pore complex and thereby might act as a scaffold to assemble the Mad1-C-Mad2 complex, a heterotetramer that catalyzes the structural conversion of open-Mad2 (O-Mad2) into closed-Mad2 (C-Mad2) which is essential for spindle-assembly checkpoint (SAC). During the metaphase-anaphase transition and before chromosome congression, is phosphorylated by Msp-1; this modification releases Mad1 from the nuclear pore complex and thereby promotes assembly of SAC ensuring a timely and effective recruitment of spindle checkpoint proteins like Mad1, Mad2 and Mps1 to unattached kinetochores (KT). In testes, has a role in stem cell asymmetric division and maintenance via regulation of mitotic spindle assembly checkpoint (SAC) complex. This is Nucleoprotein TPR from Drosophila melanogaster (Fruit fly).